Consider the following 286-residue polypeptide: ATP synthase gamma chain (286 aa).

Belongs to the ATPase gamma chain family. As to quaternary structure, F-type ATPases have 2 components, CF(1) - the catalytic core - and CF(0) - the membrane proton channel. CF(1) has five subunits: alpha(3), beta(3), gamma(1), delta(1), epsilon(1). CF(0) has three main subunits: a, b and c.

The protein localises to the cell inner membrane. In terms of biological role, produces ATP from ADP in the presence of a proton gradient across the membrane. The gamma chain is believed to be important in regulating ATPase activity and the flow of protons through the CF(0) complex. This Shewanella pealeana (strain ATCC 700345 / ANG-SQ1) protein is ATP synthase gamma chain.